The primary structure comprises 158 residues: MAGFLDNFRWPECECIDWSERRNAVASVVAGILFFTGWWIMIDAAVVYPKPEQLNHAFHTCGVFSTLAFFMINAVSNAQVRGDSYESGCLGRTGARVWLFIGFMLMFGSLIASMWILFGAYVTQNTDVYPGLAVFFQNALIFFSTLIYKFGRTEELWT.

Ala2 carries the post-translational modification N-acetylalanine. 4 helical membrane-spanning segments follow: residues 28–48 (VVAG…AVVY), 56–76 (HAFH…NAVS), 98–118 (WLFI…WILF), and 128–148 (VYPG…TLIY).

This sequence belongs to the UPF0220 family. May form homotrimers or homodimers.

It localises to the endoplasmic reticulum membrane. The protein resides in the golgi apparatus membrane. The protein is Transmembrane protein 50B (TMEM50B) of Bos taurus (Bovine).